The chain runs to 759 residues: Putative ATP-dependent DNA helicase YjcD (759 aa).

A disordered region spans residues 68-121; the sequence is ACEPKPSKEGKKEDDQESGVIRLPKGKAIAADPSPAVTEWHRPRSIKPGTPFVP. The segment covering 69-81 has biased composition (basic and acidic residues); it reads CEPKPSKEGKKED. The region spanning 134 to 413 is the UvrD-like helicase ATP-binding domain; sequence VGLNTDQLKA…IYLTANYRST (280 aa). ATP is bound by residues 158 to 163 and arginine 411; that span reads GSGKTR. The UvrD-like helicase C-terminal domain maps to 414-676; it reads HPIVSSADIV…QLMTIHRSKG (263 aa).

This sequence belongs to the helicase family. UvrD subfamily.

The protein resides in the cytoplasm. The enzyme catalyses Couples ATP hydrolysis with the unwinding of duplex DNA by translocating in the 3'-5' direction.. It catalyses the reaction ATP + H2O = ADP + phosphate + H(+). In terms of biological role, may be involved in the generation of recombinogenic substrates for the subsequent action of RecA. In Bacillus subtilis (strain 168), this protein is Putative ATP-dependent DNA helicase YjcD (yjcD).